Consider the following 908-residue polypeptide: 26S proteasome non-ATPase regulatory subunit 2 (908 aa).

Position 1 is an N-acetylmethionine (Met1). Residues 1 to 52 (MEEGGRDKAPVQPQQSPAAALGGTDEKPSGKERRDAGDKDKEQELSEEDKQL) are disordered. The span at 10–20 (PVQPQQSPAAA) shows a compositional bias: low complexity. A Phosphoserine modification is found at Ser16. Thr24 carries the post-translational modification Phosphothreonine. A compositionally biased stretch (basic and acidic residues) spans 24–52 (TDEKPSGKERRDAGDKDKEQELSEEDKQL). Ser29 and Ser147 each carry phosphoserine. The residue at position 194 (Tyr194) is a Phosphotyrosine. Phosphoserine occurs at positions 361 and 363. 5 PC repeats span residues 409–442 (SAAASLGMILLWDVDGGLTQIDKYLYSSEDYIKS), 443–479 (GALLACGIVNSGVRNECDPALALLSDYVLHNSNTMRL), 480–514 (GSIFGLGLAYAGSNREDVLTLLLPVMGDSKSSMEV), 517–551 (VTALACGMIAVGSCNGDVTSTILQTIMEKSETELK), and 560–589 (LGLGLNHLGKGEAIEAILAALEVVSEPFRS). Lys551 is subject to N6-acetyllysine. Basic and acidic residues predominate over residues 623-643 (KEKEEDKDKKEKKDKDKKEAP). The disordered stretch occupies residues 623-645 (KEKEEDKDKKEKKDKDKKEAPAD). PC repeat units lie at residues 692-723 (LALALISVSNPRLNILDTLSKFSHDADPEVSY) and 742-757 (AAMLRQLAQYHAKDPN). A required for interaction with UBLCP1 region spans residues 708 to 903 (DTLSKFSHDA…LEGFVILRKN (196 aa)).

Belongs to the proteasome subunit S2 family. Component of the 19S proteasome regulatory particle complex. The 26S proteasome consists of a 20S core particle (CP) and two 19S regulatory subunits (RP). The regulatory particle is made of a lid composed of 9 subunits, a base containing 6 ATPases and few additional components including PSMD2. Interacts with RPGRIP1L. Interacts with CRY1 in a KDM8-dependent manner. Interacts (via C-terminus) with phosphatase UBLCP1 (via ubiquitin-like domain); the interaction recruits UBLCP1 to the 19S regulatory particle where it dephosphorylates 19S subunit PSMC2/RPT1 which impairs PSMC2 ATPase activity and disrupts 26S proteasome assembly.

Functionally, component of the 26S proteasome, a multiprotein complex involved in the ATP-dependent degradation of ubiquitinated proteins. This complex plays a key role in the maintenance of protein homeostasis by removing misfolded or damaged proteins, which could impair cellular functions, and by removing proteins whose functions are no longer required. Therefore, the proteasome participates in numerous cellular processes, including cell cycle progression, apoptosis, or DNA damage repair. Binds to the intracellular domain of tumor necrosis factor type 1 receptor. The binding domain of TRAP1 and TRAP2 resides outside the death domain of TNFR1. The chain is 26S proteasome non-ATPase regulatory subunit 2 (PSMD2) from Pongo abelii (Sumatran orangutan).